The primary structure comprises 273 residues: MLTAHHLDVARRHNVILRDLSLSIEPGRVTALLGRNGAGKSTLLKTFAGELTGSVAPNGVRVTGDITLNGEPLACIDARRLACLRAVLPQAAQPAFPFSVDEIVLLGRYPHVRRGGATSHRDRDIAWQALERADADALVGRDVTTLSGGELARVQFARVLAQLWPDDDAMEAGPRYLLLDEPTAALDLAHQHRLLDTVRAVAREWRLGVLAIVHDPNLAARHADSIALLADGTIVAHGTPRDVMTPAHIAQCYGFAVKMVETGDGAPPVMVPA.

One can recognise an ABC transporter domain in the interval 2 to 256; sequence LTAHHLDVAR…AHIAQCYGFA (255 aa). 34–41 serves as a coordination point for ATP; the sequence is GRNGAGKS.

This sequence belongs to the ABC transporter superfamily. Heme (hemin) importer (TC 3.A.1.14.5) family. In terms of assembly, the complex is composed of two ATP-binding proteins (HmuV), two transmembrane proteins (HmuU) and a solute-binding protein (HmuT).

The protein resides in the cell inner membrane. In terms of biological role, part of the ABC transporter complex HmuTUV involved in hemin import. Responsible for energy coupling to the transport system. The sequence is that of Hemin import ATP-binding protein HmuV from Burkholderia ambifaria (strain ATCC BAA-244 / DSM 16087 / CCUG 44356 / LMG 19182 / AMMD) (Burkholderia cepacia (strain AMMD)).